A 1413-amino-acid chain; its full sequence is DNA-directed RNA polymerase subunit beta' (1413 aa).

Zn(2+)-binding residues include C70, C72, C85, and C88. Mg(2+) is bound by residues D460, D462, and D464. 4 residues coordinate Zn(2+): C819, C893, C900, and C903.

The protein belongs to the RNA polymerase beta' chain family. In terms of assembly, the RNAP catalytic core consists of 2 alpha, 1 beta, 1 beta' and 1 omega subunit. When a sigma factor is associated with the core the holoenzyme is formed, which can initiate transcription. It depends on Mg(2+) as a cofactor. Requires Zn(2+) as cofactor.

It carries out the reaction RNA(n) + a ribonucleoside 5'-triphosphate = RNA(n+1) + diphosphate. In terms of biological role, DNA-dependent RNA polymerase catalyzes the transcription of DNA into RNA using the four ribonucleoside triphosphates as substrates. The sequence is that of DNA-directed RNA polymerase subunit beta' from Burkholderia multivorans (strain ATCC 17616 / 249).